The sequence spans 133 residues: Holo-[acyl-carrier-protein] synthase (133 aa).

Positions 8 and 57 each coordinate Mg(2+).

This sequence belongs to the P-Pant transferase superfamily. AcpS family. It depends on Mg(2+) as a cofactor.

Its subcellular location is the cytoplasm. It carries out the reaction apo-[ACP] + CoA = holo-[ACP] + adenosine 3',5'-bisphosphate + H(+). Transfers the 4'-phosphopantetheine moiety from coenzyme A to a Ser of acyl-carrier-protein. This is Holo-[acyl-carrier-protein] synthase from Parvibaculum lavamentivorans (strain DS-1 / DSM 13023 / NCIMB 13966).